Reading from the N-terminus, the 118-residue chain is Large ribosomal subunit protein uL18 (118 aa).

This sequence belongs to the universal ribosomal protein uL18 family. Part of the 50S ribosomal subunit; part of the 5S rRNA/L5/L18/L25 subcomplex. Contacts the 5S and 23S rRNAs.

In terms of biological role, this is one of the proteins that bind and probably mediate the attachment of the 5S RNA into the large ribosomal subunit, where it forms part of the central protuberance. This is Large ribosomal subunit protein uL18 from Rickettsia typhi (strain ATCC VR-144 / Wilmington).